A 135-amino-acid polypeptide reads, in one-letter code: Cytochrome b5 (135 aa).

The 77-residue stretch at 4–80 (SKVYSLAEVS…MDEMCVGDID (77 aa)) folds into the Cytochrome b5 heme-binding domain. Positions 39 and 63 each coordinate heme. A helical transmembrane segment spans residues 106–126 (FIIKLLQFLVPLIILGVAVGI).

This sequence belongs to the cytochrome b5 family.

It localises to the endoplasmic reticulum membrane. Its subcellular location is the microsome membrane. Membrane bound hemoprotein which function as an electron carrier for several membrane bound oxygenases. This Cuscuta reflexa (Southern Asian dodder) protein is Cytochrome b5.